A 223-amino-acid chain; its full sequence is Virulence transcriptional regulatory protein PhoP (223 aa).

The Response regulatory domain maps to Arg2–Met116. Asp51 is modified (4-aspartylphosphate). Positions Ser124 to Leu222 form a DNA-binding region, ompR/PhoB-type.

In terms of processing, phosphorylated by PhoQ.

It is found in the cytoplasm. Functionally, member of the two-component regulatory system PhoQ/PhoP involved in virulence and adaptation to low Mg(2+) environments. Necessary for resistance to killing by polymorphonuclear leukocytes (PMNs) and cationic antimicrobial peptides (CAMP) they produce. The protein is Virulence transcriptional regulatory protein PhoP (phoP) of Shigella flexneri.